The primary structure comprises 237 residues: Ribonuclease PH (237 aa).

Phosphate is bound by residues R86 and 124 to 126 (GTR).

The protein belongs to the RNase PH family. As to quaternary structure, homohexameric ring arranged as a trimer of dimers.

It carries out the reaction tRNA(n+1) + phosphate = tRNA(n) + a ribonucleoside 5'-diphosphate. Phosphorolytic 3'-5' exoribonuclease that plays an important role in tRNA 3'-end maturation. Removes nucleotide residues following the 3'-CCA terminus of tRNAs; can also add nucleotides to the ends of RNA molecules by using nucleoside diphosphates as substrates, but this may not be physiologically important. Probably plays a role in initiation of 16S rRNA degradation (leading to ribosome degradation) during starvation. The chain is Ribonuclease PH from Nitrobacter hamburgensis (strain DSM 10229 / NCIMB 13809 / X14).